The chain runs to 303 residues: Mitochondrial carrier homolog 2 (303 aa).

Ala2 carries the N-acetylalanine modification. Over 2–15 (ADAASQVLLGSGLT) the chain is Mitochondrial intermembrane. Solcar repeat units follow at residues 2-98 (ADAA…YQES) and 118-206 (DHVI…VNTY). Residues 16–36 (ILSQPLMYVKVLIQVGYEPLP) form a helical membrane-spanning segment. Residues 37–77 (PTIGRNIFGRQVCQLPGLFSYAQHIASIDGRRGLFTGLTPR) are Cytoplasmic-facing. A helical transmembrane segment spans residues 78-92 (LCSGVLGTVVHGKVL). Over 93-135 (QHYQESDKGEELGPGNVQKEVSSSFDHVIKETTREMIARSAAT) the chain is Mitochondrial intermembrane. Residues 136 to 156 (LITHPFHVITLRSMVQFIGRE) traverse the membrane as a helical segment. Over 157-180 (SKYCGLCDSIITIYREEGILGFFA) the chain is Cytoplasmic. A helical transmembrane segment spans residues 181-199 (GLVPRLLGDILSLWLCNSL). Over 200–231 (AYLVNTYALDSGVSTMNEMKSYSQAVTGFFAS) the chain is Mitochondrial intermembrane. A helical membrane pass occupies residues 232–252 (MLTYPFVLVSNLMAVNNCGLA). Residues 253–280 (GGCPPYSPIYTSWIDCWCMLQKEGNMSR) are Cytoplasmic-facing. Residues 281 to 303 (GNSLFFRKVPFGKTYCCDLKMLI) form a helical membrane-spanning segment.

It belongs to the mitochondrial carrier (TC 2.A.29) family. As to quaternary structure, interacts with p15BID.

The protein localises to the mitochondrion outer membrane. Protein insertase that mediates insertion of transmembrane proteins into the mitochondrial outer membrane. Catalyzes insertion of proteins with alpha-helical transmembrane regions, such as signal-anchored, tail-anchored and multi-pass membrane proteins. Does not mediate insertion of beta-barrel transmembrane proteins. Also acts as a receptor for the truncated form of pro-apoptotic BH3-interacting domain death agonist (p15 BID) and has therefore a critical function in apoptosis. Regulates the quiescence/cycling of hematopoietic stem cells (HSCs). Acts as a regulator of mitochondrial fusion, essential for the naive-to-primed interconversion of embryonic stem cells (ESCs). Acts as a regulator of lipid homeostasis and has a regulatory role in adipocyte differentiation and biology. The protein is Mitochondrial carrier homolog 2 of Homo sapiens (Human).